Reading from the N-terminus, the 471-residue chain is Adenosylhomocysteinase (471 aa).

Positions 60, 135, and 196 each coordinate substrate. Thr197–Thr199 is a binding site for NAD(+). Lys226 and Asp230 together coordinate substrate. Residues Asn231, Gly260 to Gly265, Glu283, Asn318, Ile339 to His341, and Asn387 each bind NAD(+).

This sequence belongs to the adenosylhomocysteinase family. Requires NAD(+) as cofactor.

Its subcellular location is the cytoplasm. The catalysed reaction is S-adenosyl-L-homocysteine + H2O = L-homocysteine + adenosine. Its pathway is amino-acid biosynthesis; L-homocysteine biosynthesis; L-homocysteine from S-adenosyl-L-homocysteine: step 1/1. Its function is as follows. May play a key role in the regulation of the intracellular concentration of adenosylhomocysteine. This chain is Adenosylhomocysteinase, found in Chlorobaculum parvum (strain DSM 263 / NCIMB 8327) (Chlorobium vibrioforme subsp. thiosulfatophilum).